The primary structure comprises 205 residues: Thiamine-phosphate synthase (205 aa).

Residues 37 to 41 (QVREK) and asparagine 69 each bind 4-amino-2-methyl-5-(diphosphooxymethyl)pyrimidine. Residues aspartate 70 and aspartate 89 each coordinate Mg(2+). Serine 108 serves as a coordination point for 4-amino-2-methyl-5-(diphosphooxymethyl)pyrimidine. Position 134 to 136 (134 to 136 (TGS)) interacts with 2-[(2R,5Z)-2-carboxy-4-methylthiazol-5(2H)-ylidene]ethyl phosphate. Position 137 (lysine 137) interacts with 4-amino-2-methyl-5-(diphosphooxymethyl)pyrimidine. 2-[(2R,5Z)-2-carboxy-4-methylthiazol-5(2H)-ylidene]ethyl phosphate is bound by residues glycine 165 and 185–186 (IS).

Belongs to the thiamine-phosphate synthase family. Mg(2+) serves as cofactor.

The enzyme catalyses 2-[(2R,5Z)-2-carboxy-4-methylthiazol-5(2H)-ylidene]ethyl phosphate + 4-amino-2-methyl-5-(diphosphooxymethyl)pyrimidine + 2 H(+) = thiamine phosphate + CO2 + diphosphate. The catalysed reaction is 2-(2-carboxy-4-methylthiazol-5-yl)ethyl phosphate + 4-amino-2-methyl-5-(diphosphooxymethyl)pyrimidine + 2 H(+) = thiamine phosphate + CO2 + diphosphate. It carries out the reaction 4-methyl-5-(2-phosphooxyethyl)-thiazole + 4-amino-2-methyl-5-(diphosphooxymethyl)pyrimidine + H(+) = thiamine phosphate + diphosphate. It functions in the pathway cofactor biosynthesis; thiamine diphosphate biosynthesis; thiamine phosphate from 4-amino-2-methyl-5-diphosphomethylpyrimidine and 4-methyl-5-(2-phosphoethyl)-thiazole: step 1/1. Condenses 4-methyl-5-(beta-hydroxyethyl)thiazole monophosphate (THZ-P) and 2-methyl-4-amino-5-hydroxymethyl pyrimidine pyrophosphate (HMP-PP) to form thiamine monophosphate (TMP). The protein is Thiamine-phosphate synthase of Clostridium botulinum (strain Loch Maree / Type A3).